A 118-amino-acid polypeptide reads, in one-letter code: Large ribosomal subunit protein uL18 (118 aa).

It belongs to the universal ribosomal protein uL18 family. In terms of assembly, part of the 50S ribosomal subunit; part of the 5S rRNA/L5/L18/L25 subcomplex. Contacts the 5S and 23S rRNAs.

In terms of biological role, this is one of the proteins that bind and probably mediate the attachment of the 5S RNA into the large ribosomal subunit, where it forms part of the central protuberance. The protein is Large ribosomal subunit protein uL18 of Dechloromonas aromatica (strain RCB).